A 561-amino-acid polypeptide reads, in one-letter code: Asparagine synthetase [glutamine-hydrolyzing] (561 aa).

The For GATase activity role is filled by Cys-2. One can recognise a Glutamine amidotransferase type-2 domain in the interval 2–191; sequence CGIWALFGSD…PGHYEVLDLK (190 aa). Residues 49–53, 75–77, and Asp-97 each bind L-glutamine; these read RLAVV and NGE. The Asparagine synthetase domain maps to 213–536; that stretch reads HALYDSVEKL…PGRADWLTHY (324 aa). ATP-binding positions include Leu-256, Ile-288, and 363 to 364; that span reads SG. Lys-385 is subject to N6-acetyllysine. Phosphothreonine is present on Thr-545. Phosphoserine is present on Ser-557.

It catalyses the reaction L-aspartate + L-glutamine + ATP + H2O = L-asparagine + L-glutamate + AMP + diphosphate + H(+). It functions in the pathway amino-acid biosynthesis; L-asparagine biosynthesis; L-asparagine from L-aspartate (L-Gln route): step 1/1. In Mesocricetus auratus (Golden hamster), this protein is Asparagine synthetase [glutamine-hydrolyzing] (ASNS).